Here is a 241-residue protein sequence, read N- to C-terminus: MIILSTNDNLTNPYEIARYIKEAKKSTPVRAYIQGNIEIEETEELEVYGCDNFKIVFGELDVVEKLIEANEDKIKHYRLEYDRRNSAIPLLDIKHLDARIEPGAIIRDKVKIGKNAVIMMGAVINIGAEIGENSMIDMNAVIGARGIIGKNVHVGAGAVIAGVLEPPSSVPVVLEDNVLVGANAVILEGVRVGHGAVVAAGSVVTEDVPPNTVVAGVPAKIVKIVDDKTREKTKLMEDLRG.

Belongs to the transferase hexapeptide repeat family. DapH subfamily.

It carries out the reaction (S)-2,3,4,5-tetrahydrodipicolinate + acetyl-CoA + H2O = L-2-acetamido-6-oxoheptanedioate + CoA. It participates in amino-acid biosynthesis; L-lysine biosynthesis via DAP pathway; LL-2,6-diaminopimelate from (S)-tetrahydrodipicolinate (acetylase route): step 1/3. Functionally, catalyzes the transfer of an acetyl group from acetyl-CoA to tetrahydrodipicolinate. The polypeptide is 2,3,4,5-tetrahydropyridine-2,6-dicarboxylate N-acetyltransferase (Thermoanaerobacter sp. (strain X514)).